Consider the following 277-residue polypeptide: Large ribosomal subunit protein uL2 (277 aa).

Residues 223-261 (SVMNPNDHPHGGGEGKSPVGRPSPVTPWGKPALGYKTRK) are disordered.

Belongs to the universal ribosomal protein uL2 family. As to quaternary structure, part of the 50S ribosomal subunit. Forms a bridge to the 30S subunit in the 70S ribosome.

Functionally, one of the primary rRNA binding proteins. Required for association of the 30S and 50S subunits to form the 70S ribosome, for tRNA binding and peptide bond formation. It has been suggested to have peptidyltransferase activity; this is somewhat controversial. Makes several contacts with the 16S rRNA in the 70S ribosome. This Clostridium botulinum (strain Alaska E43 / Type E3) protein is Large ribosomal subunit protein uL2.